The sequence spans 865 residues: Outer membrane usher protein HtrE (865 aa).

Positions 1–29 are cleaved as a signal peptide; the sequence is MTIEYTKNYHHLTRIATFCALLYCNTAFS. An intrachain disulfide couples Cys-838 to Cys-862.

It belongs to the fimbrial export usher family.

It is found in the cell outer membrane. Functionally, part of the yadCKLM-htrE-yadVN fimbrial operon. Could contribute to adhesion to various surfaces in specific environmental niches. Probably involved in the export and assembly of fimbrial subunits across the outer membrane. In Escherichia coli (strain K12), this protein is Outer membrane usher protein HtrE (htrE).